Consider the following 473-residue polypeptide: MTTIYNTLTRQKEPFSPIDPENVRMYVCGMTVYDYCHLGHARVMVVFDMIARWLRECGYPLTYVRNITDIDDKIIARAAENGETIGKLTARFIQAMHEDADALGVLRPDIEPKATENIPQMIAMIETLIQNGKAYPAANGDVYYAVREFAAYGQLSGKSLDDLRAGERVEVDGFKRDPLDFVLWKAAKAGEPAWESPWGNGRPGWHIECSAMSENLFGDTFDIHGGGADLQFPHHENEIAQSVGATGHTCGHHHAQTHHGQSIASHVKYWLHNGFIRVDGEKMSKSLGNFFTIREVLKQYDPEVVRFFILRAHYRSPLNYSDAHLDDAKGALTRLYTTLKNTPPADPMPSEAGDDYTRRFYVAMNDDFDTVKAVAVLFELAGEVNKTNDAQLAGRLKALGGIIGLLQRDPTEFLQGGAASDGLSNEEIEDLIARRKQARADKNWAESDRIRDLLNEHKIILEDNAGGTTWRRG.

Cys28 contacts Zn(2+). Positions 30–40 (MTVYDYCHLGH) match the 'HIGH' region motif. Cys209, His234, and Glu238 together coordinate Zn(2+). The short motif at 282 to 286 (KMSKS) is the 'KMSKS' region element. Lys285 contacts ATP.

Belongs to the class-I aminoacyl-tRNA synthetase family. As to quaternary structure, monomer. Zn(2+) is required as a cofactor.

It is found in the cytoplasm. It carries out the reaction tRNA(Cys) + L-cysteine + ATP = L-cysteinyl-tRNA(Cys) + AMP + diphosphate. The polypeptide is Cysteine--tRNA ligase (Neisseria meningitidis serogroup B (strain ATCC BAA-335 / MC58)).